A 303-amino-acid polypeptide reads, in one-letter code: Acetaldehyde dehydrogenase (303 aa).

Cys-130 functions as the Acyl-thioester intermediate in the catalytic mechanism. NAD(+) is bound by residues 161 to 169 (SVGPGTRKN) and Asn-272.

Belongs to the acetaldehyde dehydrogenase family.

It catalyses the reaction acetaldehyde + NAD(+) + CoA = acetyl-CoA + NADH + H(+). This chain is Acetaldehyde dehydrogenase, found in Verminephrobacter eiseniae (strain EF01-2).